Here is a 70-residue protein sequence, read N- to C-terminus: Large ribosomal subunit protein bL31 (70 aa).

Zn(2+) is bound by residues C16, C18, C37, and C40.

The protein belongs to the bacterial ribosomal protein bL31 family. Type A subfamily. In terms of assembly, part of the 50S ribosomal subunit. Zn(2+) serves as cofactor.

Its function is as follows. Binds the 23S rRNA. The protein is Large ribosomal subunit protein bL31 of Enterobacter sp. (strain 638).